We begin with the raw amino-acid sequence, 455 residues long: Ornithine decarboxylase (455 aa).

An N6-(pyridoxal phosphate)lysine modification is found at Lys-67. Pyridoxal 5'-phosphate is bound by residues Ser-197, Gly-234, and 271 to 274 (EPGR). Position 297 is a phosphoserine; by CK2 (Ser-297). 325–326 (YD) is a substrate binding site. The Proton donor; shared with dimeric partner role is filled by Cys-354. Cys-354 bears the S-nitrosocysteine mark. Residue Asp-355 participates in substrate binding. Pyridoxal 5'-phosphate is bound at residue Tyr-383.

The protein belongs to the Orn/Lys/Arg decarboxylase class-II family. Homodimer. Only the dimer is catalytically active, as the active sites are constructed of residues from both monomers. It depends on pyridoxal 5'-phosphate as a cofactor.

It catalyses the reaction L-ornithine + H(+) = putrescine + CO2. It participates in amine and polyamine biosynthesis; putrescine biosynthesis via L-ornithine pathway; putrescine from L-ornithine: step 1/1. With respect to regulation, inhibited by antizymes (AZs) OAZ1, OAZ2 and OAZ3 in response to polyamine levels. AZs inhibit the assembly of the functional homodimer by binding to ODC monomers. Additionally, OAZ1 targets ODC monomers for ubiquitin-independent proteolytic destruction by the 26S proteasome. Its function is as follows. Catalyzes the first and rate-limiting step of polyamine biosynthesis that converts ornithine into putrescine, which is the precursor for the polyamines, spermidine and spermine. Polyamines are essential for cell proliferation and are implicated in cellular processes, ranging from DNA replication to apoptosis. The chain is Ornithine decarboxylase (ODC1) from Cricetulus griseus (Chinese hamster).